The following is a 345-amino-acid chain: UPF0228 protein MA_2656 (345 aa).

This sequence belongs to the UPF0228 family.

The protein is UPF0228 protein MA_2656 of Methanosarcina acetivorans (strain ATCC 35395 / DSM 2834 / JCM 12185 / C2A).